A 603-amino-acid polypeptide reads, in one-letter code: Probable methyltransferase PMT4 (603 aa).

Over 1–12 the chain is Cytoplasmic; it reads MKVASVIGLRPR. Residues 13 to 33 traverse the membrane as a helical; Signal-anchor for type II membrane protein segment; that stretch reads ISGLLFLTLGVIALITILVPN. At 34–603 the chain is on the lumenal side; sequence SDSSSTTSTT…LVCQKPLLKK (570 aa). Residues Asn-96 and Asn-393 are each glycosylated (N-linked (GlcNAc...) asparagine).

This sequence belongs to the methyltransferase superfamily.

The protein resides in the endoplasmic reticulum membrane. The protein is Probable methyltransferase PMT4 of Arabidopsis thaliana (Mouse-ear cress).